The chain runs to 270 residues: Cell division protein DivIB (270 aa).

At 1–28 (MAENKRVISIENRIPELKKYRKKKLVRH) the chain is on the cytoplasmic side. Residues 29 to 49 (LAILIGIFVILIAITLYFLSP) traverse the membrane as a helical segment. Residues 50 to 270 (LSKLDKIAVS…AAKEKKETNE (221 aa)) lie on the Extracellular side of the membrane. In terms of domain architecture, POTRA spans 51–119 (SKLDKIAVSG…NDVQINITEF (69 aa)).

The protein belongs to the FtsQ/DivIB family. DivIB subfamily.

Its subcellular location is the cell membrane. In terms of biological role, cell division protein that may be involved in stabilizing or promoting the assembly of the division complex. This chain is Cell division protein DivIB, found in Listeria monocytogenes serovar 1/2a (strain ATCC BAA-679 / EGD-e).